Reading from the N-terminus, the 378-residue chain is UPF0754 membrane protein BCA_0919 (378 aa).

The next 2 helical transmembrane spans lie at 1-21 (MNIWLSMLTTTGLGAIIGGFT) and 357-377 (YLGALLGGMIGIVQGLLLLFL).

The protein belongs to the UPF0754 family.

It is found in the cell membrane. The protein is UPF0754 membrane protein BCA_0919 of Bacillus cereus (strain 03BB102).